Here is a 79-residue protein sequence, read N- to C-terminus: Large ribosomal subunit protein bL31 (79 aa).

It belongs to the bacterial ribosomal protein bL31 family. Type A subfamily. Part of the 50S ribosomal subunit.

In terms of biological role, binds the 23S rRNA. The polypeptide is Large ribosomal subunit protein bL31 (rpmE) (Rickettsia bellii (strain RML369-C)).